Reading from the N-terminus, the 657-residue chain is Probable potassium transport system protein Kup 1 (657 aa).

Transmembrane regions (helical) follow at residues 40–60, 88–108, 135–155, 172–192, 198–218, 241–261, 282–302, 320–340, 380–400, 402–422, 432–452, and 454–474; these read VTSGFWALTLGSIGVVFGDIG, VLSLILWALLIVVTAKYVLLL, WFLLALGVVGASMFIGDSMIT, PALEHYVVPLTVLILVLLFAV, ALVASAFGPVMVVWFTCIAVM, FLLSHGTIGLVTLGAVFLAVT, WMFFVLPSLLINYFGQGALVL, LVLPLVGLATAATVIASQAVI, LLLIGVMLLVLLFHTPSNLAS, YGIAVSTTMVADGIMGFVVIW, AAAVILPFVVVDMSFFSANLL, and LLEGAWVPLLFGAAMAGTIWT.

This sequence belongs to the HAK/KUP transporter (TC 2.A.72) family.

The protein resides in the cell inner membrane. The catalysed reaction is K(+)(in) + H(+)(in) = K(+)(out) + H(+)(out). Functionally, transport of potassium into the cell. Likely operates as a K(+):H(+) symporter. This is Probable potassium transport system protein Kup 1 from Bradyrhizobium diazoefficiens (strain JCM 10833 / BCRC 13528 / IAM 13628 / NBRC 14792 / USDA 110).